Reading from the N-terminus, the 946-residue chain is RIPOR family member 3 (946 aa).

Residues serine 9, serine 24, and serine 340 each carry the phosphoserine modification. Position 345 is a phosphothreonine (threonine 345). A phosphoserine mark is found at serine 351 and serine 384. Positions 390–512 (GPSLRSQSQE…GDREDGPGVA (123 aa)) are disordered. Residues 437-446 (SIEEEAREDP) are compositionally biased toward basic and acidic residues. A compositionally biased stretch (polar residues) spans 478–495 (SLPQGSLFHSGTASSSQN). Basic and acidic residues predominate over residues 496–508 (GHEEGATGDREDG).

Belongs to the RIPOR family.

This Homo sapiens (Human) protein is RIPOR family member 3.